Reading from the N-terminus, the 865-residue chain is Alanine--tRNA ligase (865 aa).

4 residues coordinate Zn(2+): His554, His558, Cys656, and His660.

This sequence belongs to the class-II aminoacyl-tRNA synthetase family. Zn(2+) serves as cofactor.

The protein localises to the cytoplasm. It catalyses the reaction tRNA(Ala) + L-alanine + ATP = L-alanyl-tRNA(Ala) + AMP + diphosphate. In terms of biological role, catalyzes the attachment of alanine to tRNA(Ala) in a two-step reaction: alanine is first activated by ATP to form Ala-AMP and then transferred to the acceptor end of tRNA(Ala). Also edits incorrectly charged Ser-tRNA(Ala) and Gly-tRNA(Ala) via its editing domain. The polypeptide is Alanine--tRNA ligase (Francisella tularensis subsp. novicida (strain U112)).